The chain runs to 430 residues: von Willebrand factor (430 aa).

N6 carries N-linked (GlcNAc...) asparagine glycosylation. C9 and C12 are oxidised to a cystine. Residues T23, T30, and T31 are each glycosylated (O-linked (GalNAc...) threonine). C47 and C233 form a disulfide bridge. One can recognise a VWFA 1; binding site for platelet glycoprotein Ib domain in the interval 52 to 228 (DLVFLLDGSY…DELEQRRDEI (177 aa)). O-linked (GalNAc...) threonine glycosylation is present at T252. An O-linked (GalNAc...) serine glycan is attached at S261. Residues 273–430 (DVVFVLEASD…ITPIFIQDFE (158 aa)) form the VWFA 2 domain. N-linked (GlcNAc...) asparagine glycans are attached at residues N290 and N349.

Multimeric. Interacts with F8. In terms of processing, N- and O-glycosylated. In terms of tissue distribution, plasma.

It localises to the secreted. The protein localises to the extracellular space. It is found in the extracellular matrix. Its function is as follows. Important in the maintenance of hemostasis, it promotes adhesion of platelets to the sites of vascular injury by forming a molecular bridge between sub-endothelial collagen matrix and platelet-surface receptor complex GPIb-IX-V. Also acts as a chaperone for coagulation factor VIII, delivering it to the site of injury, stabilizing its heterodimeric structure and protecting it from premature clearance from plasma. The sequence is that of von Willebrand factor from Rattus norvegicus (Rat).